A 338-amino-acid chain; its full sequence is MTRISLTRYLVEEQRKHNTIQPELRLLIEVVARACKAISNAVSKGALAGVLGSAGTGNVQGETQQKLDVIANEVLLDANEWGGHLAAMASEEMESFYEIPNRYPKGEYLLMFDPLDGSSNIDVNVSIGTIFSVLHMPKPGQTVTEADFLQPGTHQVAAGYAVYGPQTTLVLTVGNGVHMFTLDREAGSFVLTQSNVTIPEDTKEFAINMSNMRHWAPPVRKYIDECLAGDEGPRGKNFNMRWVASMVADVHRILTRGGIFMYPWDKREPEKPGKLRLMYEANPMAMLVEQAGGAATNGEQRILDVQPEKLHQRVSVILGSKNEVERVTRYHQEAQAKA.

4 residues coordinate Mg(2+): E91, D113, L115, and D116. Residues 116–119 (DGSS), N208, and K274 contribute to the substrate site. Residue E280 coordinates Mg(2+).

The protein belongs to the FBPase class 1 family. In terms of assembly, homotetramer. Requires Mg(2+) as cofactor.

It localises to the cytoplasm. The catalysed reaction is beta-D-fructose 1,6-bisphosphate + H2O = beta-D-fructose 6-phosphate + phosphate. It participates in carbohydrate biosynthesis; gluconeogenesis. The sequence is that of Fructose-1,6-bisphosphatase class 1 1 from Cupriavidus taiwanensis (strain DSM 17343 / BCRC 17206 / CCUG 44338 / CIP 107171 / LMG 19424 / R1) (Ralstonia taiwanensis (strain LMG 19424)).